Reading from the N-terminus, the 429-residue chain is Serine--tRNA ligase (429 aa).

An L-serine-binding site is contributed by Thr236–Glu238. Arg267–Glu269 is an ATP binding site. Glu290 contributes to the L-serine binding site. Glu354 to Ser357 is a binding site for ATP. Ser390 provides a ligand contact to L-serine.

The protein belongs to the class-II aminoacyl-tRNA synthetase family. Type-1 seryl-tRNA synthetase subfamily. In terms of assembly, homodimer. The tRNA molecule binds across the dimer.

Its subcellular location is the cytoplasm. It catalyses the reaction tRNA(Ser) + L-serine + ATP = L-seryl-tRNA(Ser) + AMP + diphosphate + H(+). It carries out the reaction tRNA(Sec) + L-serine + ATP = L-seryl-tRNA(Sec) + AMP + diphosphate + H(+). It participates in aminoacyl-tRNA biosynthesis; selenocysteinyl-tRNA(Sec) biosynthesis; L-seryl-tRNA(Sec) from L-serine and tRNA(Sec): step 1/1. In terms of biological role, catalyzes the attachment of serine to tRNA(Ser). Is also able to aminoacylate tRNA(Sec) with serine, to form the misacylated tRNA L-seryl-tRNA(Sec), which will be further converted into selenocysteinyl-tRNA(Sec). This is Serine--tRNA ligase from Wigglesworthia glossinidia brevipalpis.